The following is a 295-amino-acid chain: Tyrosine recombinase XerC (295 aa).

The 84-residue stretch at Met1–Thr84 folds into the Core-binding (CB) domain. The 185-residue stretch at Lys105 to Arg289 folds into the Tyr recombinase domain. Active-site residues include Arg145, Lys169, His241, Arg244, and His267. The active-site O-(3'-phospho-DNA)-tyrosine intermediate is the Tyr276.

The protein belongs to the 'phage' integrase family. XerC subfamily. As to quaternary structure, forms a cyclic heterotetrameric complex composed of two molecules of XerC and two molecules of XerD.

It localises to the cytoplasm. Its function is as follows. Site-specific tyrosine recombinase, which acts by catalyzing the cutting and rejoining of the recombining DNA molecules. The XerC-XerD complex is essential to convert dimers of the bacterial chromosome into monomers to permit their segregation at cell division. It also contributes to the segregational stability of plasmids. The sequence is that of Tyrosine recombinase XerC from Lactobacillus delbrueckii subsp. bulgaricus (strain ATCC 11842 / DSM 20081 / BCRC 10696 / JCM 1002 / NBRC 13953 / NCIMB 11778 / NCTC 12712 / WDCM 00102 / Lb 14).